We begin with the raw amino-acid sequence, 141 residues long: Hemoglobin subunit alpha (141 aa).

Positions 1-141 (VLSPADKTNV…VSTVLTSKYR (141 aa)) constitute a Globin domain. A Phosphoserine modification is found at Ser3. Lys7 carries the post-translational modification N6-succinyllysine. Thr8 carries the phosphothreonine modification. Position 11 is an N6-succinyllysine (Lys11). The residue at position 16 (Lys16) is an N6-acetyllysine; alternate. Position 16 is an N6-succinyllysine; alternate (Lys16). Residue Tyr24 is modified to Phosphotyrosine. Ser35 carries the phosphoserine modification. Lys40 bears the N6-succinyllysine mark. Ser49 carries the post-translational modification Phosphoserine. His58 provides a ligand contact to O2. His87 contributes to the heme b binding site. Phosphoserine is present on Ser102. Thr108 bears the Phosphothreonine mark. Phosphoserine is present on Ser124. Phosphothreonine is present on residues Thr134 and Thr137. Ser138 bears the Phosphoserine mark.

This sequence belongs to the globin family. In terms of assembly, heterotetramer of two alpha chains and two beta chains. As to expression, red blood cells.

Its function is as follows. Involved in oxygen transport from the lung to the various peripheral tissues. Hemopressin acts as an antagonist peptide of the cannabinoid receptor CNR1. Hemopressin-binding efficiently blocks cannabinoid receptor CNR1 and subsequent signaling. The sequence is that of Hemoglobin subunit alpha (HBA) from Odobenus rosmarus divergens (Pacific walrus).